The primary structure comprises 239 residues: Tetraspanin-9 (239 aa).

At 1–12 (MARGCLCCVKYM) the chain is on the cytoplasmic side. The helical transmembrane segment at 13–33 (LFLFNLLFWLGGCGLLGVGVW) threads the bilayer. Residues 34-55 (LSVSQGSFATLSPSFPSISAAN) lie on the Extracellular side of the membrane. Residues 56 to 76 (LIITLGAVIMVTGFLGCLGAI) traverse the membrane as a helical segment. Over 77–85 (KENKCLLLS) the chain is Cytoplasmic. Residues 86-106 (FFITLLVILLAELILLILFFV) traverse the membrane as a helical segment. Residues 107–203 (YTDNVSENAR…VEEWLDDNKH (97 aa)) are Extracellular-facing. N-linked (GlcNAc...) asparagine glycosylation is found at Asn-110 and Asn-180. Residues 204–224 (LLGTIAMCVLVIQLLGMAFSM) traverse the membrane as a helical segment. Residues 225-239 (TLYQQIHRSGKKYEA) are Cytoplasmic-facing.

Belongs to the tetraspanin (TM4SF) family.

The protein resides in the membrane. The chain is Tetraspanin-9 (tspan9) from Salmo salar (Atlantic salmon).